A 149-amino-acid polypeptide reads, in one-letter code: Transcriptional repressor NrdR (149 aa).

Residues 3–34 (CPFCGTQDTKVIDSRLVADGASVRRRRECNHC) fold into a zinc finger. In terms of domain architecture, ATP-cone spans 49-139 (PRVIKTDGSR…VYRSFEDIRE (91 aa)).

It belongs to the NrdR family. The cofactor is Zn(2+).

In terms of biological role, negatively regulates transcription of bacterial ribonucleotide reductase nrd genes and operons by binding to NrdR-boxes. This is Transcriptional repressor NrdR from Idiomarina loihiensis (strain ATCC BAA-735 / DSM 15497 / L2-TR).